Consider the following 356-residue polypeptide: MKRELLLEKIDELKEIMPWYVLEYYQSKLSVPYSFTTLYEYLKEYRRFLEWLLDSGVANCHHIAEIELSVLENLTKKDMEAFILYLRERPLLNANTRQNGVSQTTINRTLSALSSLFKYLTEEVENADGEPYFYRNVMKKVSTKKKKETLASRAENIKQKLFLGNETIEFLEYIDCEYQNKLSKRALAFFNKNKERDLAIIALLLASGVRLSEAVNLDLKDINLNVMVIDVTRKGGKRDSVNVASFAKPYLANYLDIRKNRYKAENQDIALFLSEYRGVPNRIDASSVEKMVAKYSQDFKVRVTPHKLRHTLATRLYDATKSQVLVSHQLGHASTQVTDLYTHIVNDEQKNALDKL.

Residues 16–121 (IMPWYVLEYY…ALSSLFKYLT (106 aa)) enclose the Core-binding (CB) domain. The Tyr recombinase domain occupies 169–354 (EFLEYIDCEY…VNDEQKNALD (186 aa)). Catalysis depends on residues Arg210, Lys234, His306, Arg309, and His332. Tyr341 acts as the O-(3'-phospho-DNA)-tyrosine intermediate in catalysis.

Belongs to the 'phage' integrase family. XerS subfamily.

The protein localises to the cytoplasm. Its activity is regulated as follows. FtsK is required for recombination. In terms of biological role, site-specific tyrosine recombinase, which acts by catalyzing the cutting and rejoining of the recombining DNA molecules. Essential to convert dimers of the bacterial chromosome into monomers to permit their segregation at cell division. The chain is Tyrosine recombinase XerS from Streptococcus agalactiae serotype Ia (strain ATCC 27591 / A909 / CDC SS700).